We begin with the raw amino-acid sequence, 718 residues long: Auxin response factor 2 (718 aa).

The segment at 1-24 (MVGIDLNTVEEEEDEEEGGATGTV) is disordered. Positions 8–18 (TVEEEEDEEEG) are enriched in acidic residues. Residues 147 to 249 (FCKTLTASDT…ELRLGVRRAA (103 aa)) constitute a DNA-binding region (TF-B3).

Belongs to the ARF family. As to quaternary structure, homo and heterodimers. Expressed in roots, culms, leaves and young panicles.

Its subcellular location is the nucleus. Its function is as follows. Auxin response factors (ARFs) are transcriptional factors that bind specifically to the DNA sequence 5'-TGTCTC-3' found in the auxin-responsive promoter elements (AuxREs). The sequence is that of Auxin response factor 2 (ARF2) from Oryza sativa subsp. japonica (Rice).